A 972-amino-acid chain; its full sequence is Mast/stem cell growth factor receptor Kit (972 aa).

A signal peptide spans 1 to 25 (MRGARRAWDFLFVLQLLLRVQTGSS). Residues 26-520 (QPSVSPEELS…QIHAHTLFTP (495 aa)) lie on the Extracellular side of the membrane. Ig-like C2-type domains lie at 27-112 (PSVS…VFVR), 121-205 (DPPL…LKVR), 212-308 (PVVA…LEVV), 317-410 (PMMN…VYVN), and 413-507 (PEIL…FNFA). 4 cysteine pairs are disulfide-bonded: cysteine 58-cysteine 97, cysteine 136-cysteine 186, cysteine 151-cysteine 183, and cysteine 233-cysteine 290. N-linked (GlcNAc...) asparagine glycosylation is found at asparagine 94 and asparagine 145. Residues asparagine 283, asparagine 293, asparagine 300, asparagine 320, asparagine 352, asparagine 367, asparagine 400, asparagine 463, and asparagine 486 are each glycosylated (N-linked (GlcNAc...) asparagine). Cysteine 428 and cysteine 491 are disulfide-bonded. The helical transmembrane segment at 521–541 (LLIGFVIAAGMMCIIVMILTY) threads the bilayer. At 542–972 (KYLQKPMYEV…TQPLLVHEDV (431 aa)) the chain is on the cytoplasmic side. A phosphotyrosine; by autocatalysis mark is found at tyrosine 543, tyrosine 549, tyrosine 564, and tyrosine 566. Tyrosine 564 is a binding site for Mg(2+). The important for interaction with phosphotyrosine-binding proteins stretch occupies residues 564 to 566 (YVY). One can recognise a Protein kinase domain in the interval 585 to 933 (LSFGKTLGAG…ISESTNHIYS (349 aa)). ATP contacts are provided by residues 592-599 (GAGAFGKV), lysine 619, and 667-673 (EYCCYGD). 3 positions are modified to phosphotyrosine; by autocatalysis: tyrosine 699, tyrosine 717, and tyrosine 726. Phosphoserine; by PKC/PRKCA is present on residues serine 737 and serine 742. Aspartate 788 acts as the Proton acceptor in catalysis. An ATP-binding site is contributed by arginine 792. Positions 793 and 806 each coordinate Mg(2+). Serine 817 carries the post-translational modification Phosphoserine. Position 819 is a phosphotyrosine; by autocatalysis (tyrosine 819). Serine 887 is subject to Phosphoserine. A phosphotyrosine; by autocatalysis mark is found at tyrosine 896 and tyrosine 932. The residue at position 955 (serine 955) is a Phosphoserine.

This sequence belongs to the protein kinase superfamily. Tyr protein kinase family. CSF-1/PDGF receptor subfamily. As to quaternary structure, monomer in the absence of bound KITLG/SCF. Homodimer in the presence of bound KITLG/SCF, forming a heterotetramer with two KITLG/SCF molecules. Interacts (via phosphorylated tyrosine residues) with the adapter proteins GRB2 and GRB7 (via SH2 domain), and SH2B2/APS. Interacts (via C-terminus) with MPDZ (via the tenth PDZ domain). Interacts (via phosphorylated tyrosine residues) with PIK3R1 and PIK3 catalytic subunit. Interacts (via phosphorylated tyrosine) with CRK (isoform Crk-II), FYN, SHC1 and MATK/CHK (via SH2 domain). Interacts with LYN and FES/FPS. Interacts (via phosphorylated tyrosine residues) with the protein phosphatases PTPN6/SHP-1 (via SH2 domain), PTPN11/SHP-2 (via SH2 domain) and PTPRU. Interacts with PLCG1. Interacts with DOK1 and TEC. Interacts with IL1RAP (independent of stimulation with KITLG/SCF). A mast cell-specific KITLG/SCF-induced interleukin-33 signaling complex contains IL1RL1, IL1RAP, KIT and MYD88. Ubiquitinated by SOCS6. KIT is rapidly ubiquitinated after autophosphorylation induced by KITLG/SCF binding, leading to internalization and degradation. In terms of processing, autophosphorylated on tyrosine residues. KITLG/SCF binding promotes autophosphorylation. Phosphorylated tyrosine residues are important for interaction with specific binding partners.

Its subcellular location is the cell membrane. The catalysed reaction is L-tyrosyl-[protein] + ATP = O-phospho-L-tyrosyl-[protein] + ADP + H(+). Present in an inactive conformation in the absence of bound ligand. KITLG/SCF binding leads to dimerization and activation by autophosphorylation on tyrosine residues. Activity is down-regulated by PRKCA-mediated phosphorylation on serine residues. Its function is as follows. Tyrosine-protein kinase that acts as a cell-surface receptor for the cytokine KITLG/SCF and plays an essential role in the regulation of cell survival and proliferation, hematopoiesis, stem cell maintenance, gametogenesis, mast cell development, migration and function, and in melanogenesis. In response to KITLG/SCF binding, KIT can activate several signaling pathways. Phosphorylates PIK3R1, PLCG1, SH2B2/APS and CBL. Activates the AKT1 signaling pathway by phosphorylation of PIK3R1, the regulatory subunit of phosphatidylinositol 3-kinase. Activated KIT also transmits signals via GRB2 and activation of RAS, RAF1 and the MAP kinases MAPK1/ERK2 and/or MAPK3/ERK1. Promotes activation of STAT family members STAT1, STAT3, STAT5A and STAT5B. Activation of PLCG1 leads to the production of the cellular signaling molecules diacylglycerol and inositol 1,4,5-trisphosphate. KIT signaling is modulated by protein phosphatases, and by rapid internalization and degradation of the receptor. Activated KIT promotes phosphorylation of the protein phosphatases PTPN6/SHP-1 and PTPRU, and of the transcription factors STAT1, STAT3, STAT5A and STAT5B. Promotes phosphorylation of PIK3R1, CBL, CRK (isoform Crk-II), LYN, MAPK1/ERK2 and/or MAPK3/ERK1, PLCG1, SRC and SHC1. In Sus scrofa (Pig), this protein is Mast/stem cell growth factor receptor Kit (KIT).